Consider the following 518-residue polypeptide: Sugar transport protein MST3 (518 aa).

The Cytoplasmic portion of the chain corresponds to 1–18; sequence MAGGAVVSTGAGKDYPGK. Residues 19–39 traverse the membrane as a helical segment; it reads LTLFVFFTCVVAATGGLIFGY. The Extracellular segment spans residues 40 to 80; sequence DIGISGGVTSMDPFLRKFFPEVYRKKQMADKNNQYCKYDNQ. A helical membrane pass occupies residues 81–101; the sequence is LLQTFTSSLYLAALVSSFFAA. Residues 102 to 117 lie on the Cytoplasmic side of the membrane; it reads TVTRVLGRKWSMFAGG. The chain crosses the membrane as a helical span at residues 118 to 138; sequence LTFLIGAALNGAAENVAMLIV. Residues 139-140 are Extracellular-facing; that stretch reads GR. A helical transmembrane segment spans residues 141-161; that stretch reads ILLGVGVGFANQSVPVYLSEM. The Cytoplasmic segment spans residues 162–167; that stretch reads APARLR. The chain crosses the membrane as a helical span at residues 168–188; it reads GMLNIGFQLMITIGILAAELI. Residues 189–202 are Extracellular-facing; that stretch reads NYGTAKIKAGWGWR. Residues 203–223 traverse the membrane as a helical segment; sequence VSLALAAVPAAIITLGSLFLP. Residues 224–290 lie on the Cytoplasmic side of the membrane; sequence DTPNSLIDRG…YRAQLTMAIC (67 aa). The chain crosses the membrane as a helical span at residues 291–311; that stretch reads IPFFQQLTGINVIMFYAPVLF. At 312–322 the chain is on the extracellular side; that stretch reads DTLGFKSDASL. A helical transmembrane segment spans residues 323 to 343; that stretch reads MSAVITGLVNVFATLVSIFTV. Residues 344–351 lie on the Cytoplasmic side of the membrane; that stretch reads DRLGRRKL. A helical transmembrane segment spans residues 352 to 372; that stretch reads FLQGGAQMVVCQVVVGTLIAV. At 373 to 387 the chain is on the extracellular side; sequence KFGTSGIGDIPKGYA. Residues 388 to 408 form a helical membrane-spanning segment; sequence AVVVLFICMYVAGFAWSWGPL. At 409–427 the chain is on the cytoplasmic side; that stretch reads GWLVPSEIFPLEIRPAGQS. Residues 428-448 traverse the membrane as a helical segment; that stretch reads INVSVNMLFTFVIAQAFLTML. Residues 449-452 are Extracellular-facing; sequence CHMK. Residues 453–473 form a helical membrane-spanning segment; the sequence is FGLFYFFAGWVVIMTVFIALF. Topologically, residues 474-518 are cytoplasmic; it reads LPETKNVPIEEMVLVWKSHWFWRRFIGDHDVHVGANHVSNNKLQP.

This sequence belongs to the major facilitator superfamily. Sugar transporter (TC 2.A.1.1) family. Highly expressed in roots. Expressed in xylem and sclerenchyma cells of roots. Expressed at low levels in leaves.

It localises to the membrane. In terms of biological role, mediates active uptake of hexoses by sugar:proton symport. Can transport glucose, xylose and 3-O-methylglucose. May be involved in the accumulation of monosaccharides required for cell wall synthesis during root development. In Oryza sativa subsp. japonica (Rice), this protein is Sugar transport protein MST3.